The primary structure comprises 299 residues: Ciliary microtubule inner protein 2B (299 aa).

Belongs to the CIMIP2 family. As to expression, expressed in airway epithelial cells.

It localises to the cytoplasm. It is found in the cytoskeleton. Its subcellular location is the cilium axoneme. Microtubule inner protein (MIP) part of the dynein-decorated doublet microtubules (DMTs) in cilia axoneme, which is required for motile cilia beating. The polypeptide is Ciliary microtubule inner protein 2B (cimip2b) (Danio rerio (Zebrafish)).